A 403-amino-acid chain; its full sequence is Malate dehydrogenase, chloroplastic (403 aa).

Residues 1–80 (MATATSASLF…DKKPYGFKIN (80 aa)) constitute a chloroplast transit peptide. Residues 89–95 (GAAGGIG) and Asp-115 contribute to the NAD(+) site. Positions 162 and 168 each coordinate substrate. NAD(+) is bound by residues Asn-175 and 198–200 (ISN). Asn-200 and Arg-234 together coordinate substrate. His-258 acts as the Proton acceptor in catalysis. NAD(+) is bound at residue Met-309.

Belongs to the LDH/MDH superfamily. MDH type 1 family. As to quaternary structure, homodimer. As to expression, expressed in rosette leaves. Expressed in meristematic regions of roots and shoots, cotyledons, young leaves, trichomes, stamen, pollen, tapetum, gynoecium and ovules.

Its subcellular location is the plastid. The protein resides in the chloroplast stroma. It carries out the reaction (S)-malate + NAD(+) = oxaloacetate + NADH + H(+). In terms of biological role, catalyzes a reversible NAD-dependent dehydrogenase reaction involved in central metabolism and redox homeostasis between organelle compartments. Plays a key role in the metabolism of dark chloroplasts and non-green plastids. Essential for embryo viability. Plays an essential role in heterotrophic metabolism in embryos, and autotrophic metabolism in photosynthetic tissues as well. The protein is Malate dehydrogenase, chloroplastic of Arabidopsis thaliana (Mouse-ear cress).